The following is a 484-amino-acid chain: Putative beta-barrel assembly-enhancing protease (484 aa).

Positions 1–23 (MKFFPTRTLLCLCIAAPCLPAIA) are cleaved as a signal peptide. Residue histidine 133 coordinates Zn(2+). Residue glutamate 134 is part of the active site. Zn(2+)-binding residues include histidine 137 and glutamate 198. Residue aspartate 202 is the Proton donor of the active site. TPR repeat units follow at residues 307–340 (PSIQ…QPDN), 341–374 (HFYL…TPNN), 376–408 (VLTI…NPND), and 426–459 (AEDL…VELG).

This sequence belongs to the peptidase M48 family. BepA subfamily. The cofactor is Zn(2+).

Its subcellular location is the periplasm. Its function is as follows. Functions both as a chaperone and a metalloprotease. Maintains the integrity of the outer membrane by promoting either the assembly or the elimination of outer membrane proteins, depending on their folding state. This is Putative beta-barrel assembly-enhancing protease from Vibrio cholerae serotype O1 (strain ATCC 39315 / El Tor Inaba N16961).